The sequence spans 560 residues: Oxygen-dependent choline dehydrogenase (560 aa).

6–35 (DYIIIGGGSAGSVLGGRLSEDVSNNVLVLE) contributes to the FAD binding site. His-472 functions as the Proton acceptor in the catalytic mechanism.

It belongs to the GMC oxidoreductase family. It depends on FAD as a cofactor.

The enzyme catalyses choline + A = betaine aldehyde + AH2. It carries out the reaction betaine aldehyde + NAD(+) + H2O = glycine betaine + NADH + 2 H(+). It functions in the pathway amine and polyamine biosynthesis; betaine biosynthesis via choline pathway; betaine aldehyde from choline (cytochrome c reductase route): step 1/1. Involved in the biosynthesis of the osmoprotectant glycine betaine. Catalyzes the oxidation of choline to betaine aldehyde and betaine aldehyde to glycine betaine at the same rate. The sequence is that of Oxygen-dependent choline dehydrogenase from Staphylococcus xylosus.